The sequence spans 179 residues: Crossover junction endodeoxyribonuclease RuvC (179 aa).

Active-site residues include Asp-7, Glu-67, and Asp-140. Mg(2+) contacts are provided by Asp-7, Glu-67, and Asp-140.

The protein belongs to the RuvC family. As to quaternary structure, homodimer which binds Holliday junction (HJ) DNA. The HJ becomes 2-fold symmetrical on binding to RuvC with unstacked arms; it has a different conformation from HJ DNA in complex with RuvA. In the full resolvosome a probable DNA-RuvA(4)-RuvB(12)-RuvC(2) complex forms which resolves the HJ. Mg(2+) is required as a cofactor.

It localises to the cytoplasm. It catalyses the reaction Endonucleolytic cleavage at a junction such as a reciprocal single-stranded crossover between two homologous DNA duplexes (Holliday junction).. Functionally, the RuvA-RuvB-RuvC complex processes Holliday junction (HJ) DNA during genetic recombination and DNA repair. Endonuclease that resolves HJ intermediates. Cleaves cruciform DNA by making single-stranded nicks across the HJ at symmetrical positions within the homologous arms, yielding a 5'-phosphate and a 3'-hydroxyl group; requires a central core of homology in the junction. The consensus cleavage sequence is 5'-(A/T)TT(C/G)-3'. Cleavage occurs on the 3'-side of the TT dinucleotide at the point of strand exchange. HJ branch migration catalyzed by RuvA-RuvB allows RuvC to scan DNA until it finds its consensus sequence, where it cleaves and resolves the cruciform DNA. This is Crossover junction endodeoxyribonuclease RuvC from Salinibacter ruber (strain DSM 13855 / M31).